The sequence spans 526 residues: Berberine bridge enzyme-like 11 (526 aa).

Positions 1–21 (MEKLLIICMLLISVLVATSQS) are cleaved as a signal peptide. Cys-31 and Cys-94 are oxidised to a cystine. 4 N-linked (GlcNAc...) asparagine glycosylation sites follow: Asn-52, Asn-136, Asn-273, and Asn-482. In terms of domain architecture, FAD-binding PCMH-type spans 72–247 (TTPKPIAIIT…MGYKIRLVPV (176 aa)). Positions 109-171 (HDFEGLSYTS…NVLGFPAGLC (63 aa)) form a cross-link, 6-(S-cysteinyl)-8alpha-(pros-histidyl)-FAD (His-Cys).

It belongs to the oxygen-dependent FAD-linked oxidoreductase family. The cofactor is FAD. The FAD cofactor is bound via a bicovalent 6-S-cysteinyl, 8alpha-N1-histidyl FAD linkage.

The protein localises to the secreted. Its subcellular location is the cell wall. The polypeptide is Berberine bridge enzyme-like 11 (Arabidopsis thaliana (Mouse-ear cress)).